We begin with the raw amino-acid sequence, 256 residues long: Putative transposase for insertion sequence element IS112 (256 aa).

This sequence belongs to the transposase 11 family.

In terms of biological role, involved in the transposition of the insertion sequence IS112 which inactivates the SalI restriction-modification system. In Streptomyces albus G, this protein is Putative transposase for insertion sequence element IS112.